The following is a 455-amino-acid chain: tRNA modification GTPase MnmE (455 aa).

(6S)-5-formyl-5,6,7,8-tetrahydrofolate contacts are provided by arginine 26, glutamate 86, and arginine 125. A TrmE-type G domain is found at 222 to 376; the sequence is GLKTAIIGRP…VEEKINQIFF (155 aa). Asparagine 232 contributes to the K(+) binding site. Residues 232–237, 251–257, and 276–279 each bind GTP; these read NVGKSS, TDIAGTT, and DTAG. Position 236 (serine 236) interacts with Mg(2+). K(+) contacts are provided by threonine 251, isoleucine 253, and threonine 256. Residue threonine 257 participates in Mg(2+) binding. Lysine 455 serves as a coordination point for (6S)-5-formyl-5,6,7,8-tetrahydrofolate.

It belongs to the TRAFAC class TrmE-Era-EngA-EngB-Septin-like GTPase superfamily. TrmE GTPase family. In terms of assembly, homodimer. Heterotetramer of two MnmE and two MnmG subunits. Requires K(+) as cofactor.

It is found in the cytoplasm. Functionally, exhibits a very high intrinsic GTPase hydrolysis rate. Involved in the addition of a carboxymethylaminomethyl (cmnm) group at the wobble position (U34) of certain tRNAs, forming tRNA-cmnm(5)s(2)U34. In Lactococcus lactis subsp. cremoris (strain SK11), this protein is tRNA modification GTPase MnmE.